We begin with the raw amino-acid sequence, 278 residues long: uncharacterized protein (278 aa).

Residues M1–A32 form the signal peptide. Residues L33–G236 form the Peptidase S1 domain. An intrachain disulfide couples C59 to C75. Catalysis depends on charge relay system residues H74, D123, and S189.

This sequence belongs to the peptidase S1 family.

It localises to the secreted. This is an uncharacterized protein from Corynebacterium glutamicum (strain R).